The primary structure comprises 516 residues: Cysteine--tRNA ligase (516 aa).

Cysteine 32 is a Zn(2+) binding site. The 'HIGH' region signature appears at 34–44; it reads PTVYMYAHIGN. Zn(2+)-binding residues include cysteine 230, histidine 255, and glutamate 259. Positions 287–291 match the 'KMSKS' region motif; it reads KMSKS. Lysine 290 lines the ATP pocket.

It belongs to the class-I aminoacyl-tRNA synthetase family. In terms of assembly, monomer. Zn(2+) serves as cofactor.

Its subcellular location is the cytoplasm. It catalyses the reaction tRNA(Cys) + L-cysteine + ATP = L-cysteinyl-tRNA(Cys) + AMP + diphosphate. The polypeptide is Cysteine--tRNA ligase (Salinibacter ruber (strain DSM 13855 / M31)).